The chain runs to 458 residues: Phosphoglucosamine mutase (458 aa).

Serine 100 acts as the Phosphoserine intermediate in catalysis. Residues serine 100, aspartate 254, aspartate 256, and aspartate 258 each coordinate Mg(2+). Serine 100 is modified (phosphoserine).

The protein belongs to the phosphohexose mutase family. Requires Mg(2+) as cofactor. Post-translationally, activated by phosphorylation.

The enzyme catalyses alpha-D-glucosamine 1-phosphate = D-glucosamine 6-phosphate. In terms of biological role, catalyzes the conversion of glucosamine-6-phosphate to glucosamine-1-phosphate. The sequence is that of Phosphoglucosamine mutase from Nocardia farcinica (strain IFM 10152).